Consider the following 611-residue polypeptide: 4-hydroxy-3-methylbut-2-en-1-yl diphosphate synthase (flavodoxin) (611 aa).

Positions 520, 523, 554, and 561 each coordinate [4Fe-4S] cluster.

This sequence belongs to the IspG family. [4Fe-4S] cluster serves as cofactor.

The catalysed reaction is (2E)-4-hydroxy-3-methylbut-2-enyl diphosphate + oxidized [flavodoxin] + H2O + 2 H(+) = 2-C-methyl-D-erythritol 2,4-cyclic diphosphate + reduced [flavodoxin]. Its pathway is isoprenoid biosynthesis; isopentenyl diphosphate biosynthesis via DXP pathway; isopentenyl diphosphate from 1-deoxy-D-xylulose 5-phosphate: step 5/6. Converts 2C-methyl-D-erythritol 2,4-cyclodiphosphate (ME-2,4cPP) into 1-hydroxy-2-methyl-2-(E)-butenyl 4-diphosphate. The protein is 4-hydroxy-3-methylbut-2-en-1-yl diphosphate synthase (flavodoxin) of Parabacteroides distasonis (strain ATCC 8503 / DSM 20701 / CIP 104284 / JCM 5825 / NCTC 11152).